The chain runs to 309 residues: Aspartate carbamoyltransferase catalytic subunit (309 aa).

The carbamoyl phosphate site is built by R58 and T59. K86 serves as a coordination point for L-aspartate. Residues R108, H136, and Q139 each contribute to the carbamoyl phosphate site. R170 and R224 together coordinate L-aspartate. Residues G266 and P267 each coordinate carbamoyl phosphate.

This sequence belongs to the aspartate/ornithine carbamoyltransferase superfamily. ATCase family. In terms of assembly, heterododecamer (2C3:3R2) of six catalytic PyrB chains organized as two trimers (C3), and six regulatory PyrI chains organized as three dimers (R2).

It catalyses the reaction carbamoyl phosphate + L-aspartate = N-carbamoyl-L-aspartate + phosphate + H(+). It participates in pyrimidine metabolism; UMP biosynthesis via de novo pathway; (S)-dihydroorotate from bicarbonate: step 2/3. Its function is as follows. Catalyzes the condensation of carbamoyl phosphate and aspartate to form carbamoyl aspartate and inorganic phosphate, the committed step in the de novo pyrimidine nucleotide biosynthesis pathway. The protein is Aspartate carbamoyltransferase catalytic subunit of Campylobacter concisus (strain 13826).